Reading from the N-terminus, the 281-residue chain is Pantothenate synthetase (281 aa).

30–37 (MGNLHQGH) contacts ATP. The active-site Proton donor is His37. Position 61 (Gln61) interacts with (R)-pantoate. Gln61 contacts beta-alanine. 148 to 151 (GQKD) provides a ligand contact to ATP. Gln154 serves as a coordination point for (R)-pantoate. Residues Ala177 and 185–188 (LSSR) each bind ATP.

Belongs to the pantothenate synthetase family. Homodimer.

The protein localises to the cytoplasm. It carries out the reaction (R)-pantoate + beta-alanine + ATP = (R)-pantothenate + AMP + diphosphate + H(+). Its pathway is cofactor biosynthesis; (R)-pantothenate biosynthesis; (R)-pantothenate from (R)-pantoate and beta-alanine: step 1/1. In terms of biological role, catalyzes the condensation of pantoate with beta-alanine in an ATP-dependent reaction via a pantoyl-adenylate intermediate. This is Pantothenate synthetase from Acinetobacter baylyi (strain ATCC 33305 / BD413 / ADP1).